The following is a 495-amino-acid chain: OTU domain-containing protein CG3251 (495 aa).

One can recognise an OTU domain in the interval 29–150 (LFRKHMLGDA…MGHFETVLTM (122 aa)). Positions 302–364 (NFKVGAKCQV…HPLPPDEFKA (63 aa)) constitute a Tudor domain. Polar residues predominate over residues 375-389 (LHNSQMGRQSVQGDQ). Residues 375 to 404 (LHNSQMGRQSVQGDQQGFVPDPMPGTAPSM) form a disordered region. The segment covering 395–404 (DPMPGTAPSM) has biased composition (pro residues).

Its function is as follows. Putative OTU-type deubiquitinase. Catalytically inactive towards all diubiquitin molecules and long K48- and K63- linked ubiquitin chains in vitro. Potential modulator of apoptosis. In Drosophila melanogaster (Fruit fly), this protein is OTU domain-containing protein CG3251.